A 1106-amino-acid chain; its full sequence is Protein kinase C (1106 aa).

Residues 1–67 (MDGDDLIASV…MRELQLRQMK (67 aa)) form the REM-1 1 domain. A disordered region spans residues 65–138 (QMKQEGASPT…PRPFAPVPKA (74 aa)). Residues 79–93 (PPNPDGSAPVPPPKD) show a composition bias toward pro residues. Positions 149-226 (KYDTPYLGPK…LKRYEDLHVD (78 aa)) constitute an REM-1 2 domain. The C2 domain occupies 232-350 (APDDESLSTP…MRRKKIESEF (119 aa)). Positions 361 to 370 (MEHGAAHGRQ) are enriched in basic and acidic residues. A disordered region spans residues 361–400 (MEHGAAHGRQDAGGAPGSSNRPPSGGHSGGPGQGYAGGAP). The segment covering 386–400 (GHSGGPGQGYAGGAP) has biased composition (gly residues). 2 consecutive Phorbol-ester/DAG-type zinc fingers follow at residues 460 to 508 (GHKF…VTKC) and 528 to 578 (PHRF…PDFC). Composition is skewed to polar residues over residues 600–609 (KSASVSSGLS) and 658–668 (YIPPQSPTAAQ). Disordered regions lie at residues 600-625 (KSAS…PQDN) and 658-719 (YIPP…HAHY). Residues 683–693 (AAAAAAAAAAA) show a composition bias toward low complexity. In terms of domain architecture, Protein kinase spans 781–1040 (FNFLAVLGKG…AQEVMSHAFF (260 aa)). ATP is bound by residues 787-795 (LGKGNFGKV) and Lys-810. The Proton acceptor role is filled by Asp-906. The AGC-kinase C-terminal domain occupies 1041-1106 (RNINWDDIYH…RGFSYTADFA (66 aa)). The residue at position 1082 (Thr-1082) is a Phosphothreonine. Position 1100 is a phosphoserine (Ser-1100). At Tyr-1101 the chain carries Phosphotyrosine.

It belongs to the protein kinase superfamily. AGC Ser/Thr protein kinase family. PKC subfamily. Interacts with hsp90.

It carries out the reaction L-seryl-[protein] + ATP = O-phospho-L-seryl-[protein] + ADP + H(+). The catalysed reaction is L-threonyl-[protein] + ATP = O-phospho-L-threonyl-[protein] + ADP + H(+). In terms of biological role, protein kinase C; part of cell wall integrity (CWI) signaling pathway composed of pkcA, the bck1-mkk2-mpka MAPK cascade and the downstream rlmA transcription regulator. The CWI signaling pathway regulates cell wall integrity and pyomelanin formation. CWI also controls oxidative stress response, gliotoxin production, iron adaptation and asexual development. Finally, CWI is constitutively required for A.fumigatus to cope with the temperature increase found in the mammalian lung environment, during infection. Modulates the expression of fumiquinazoline cluster during conidiogenesis. The chain is Protein kinase C from Aspergillus fumigatus (strain ATCC MYA-4609 / CBS 101355 / FGSC A1100 / Af293) (Neosartorya fumigata).